Reading from the N-terminus, the 192-residue chain is GTP cyclohydrolase-2 (192 aa).

50–54 (RLHSE) lines the GTP pocket. 3 residues coordinate Zn(2+): Cys-55, Cys-66, and Cys-68. Residues 92–94 (EGR) and Thr-114 contribute to the GTP site. The active-site Proton acceptor is Asp-126. The Nucleophile role is filled by Arg-128. Residues Thr-149 and Lys-154 each coordinate GTP.

The protein belongs to the GTP cyclohydrolase II family. Zn(2+) is required as a cofactor.

The enzyme catalyses GTP + 4 H2O = 2,5-diamino-6-hydroxy-4-(5-phosphoribosylamino)-pyrimidine + formate + 2 phosphate + 3 H(+). It functions in the pathway cofactor biosynthesis; riboflavin biosynthesis; 5-amino-6-(D-ribitylamino)uracil from GTP: step 1/4. In terms of biological role, catalyzes the conversion of GTP to 2,5-diamino-6-ribosylamino-4(3H)-pyrimidinone 5'-phosphate (DARP), formate and pyrophosphate. The protein is GTP cyclohydrolase-2 of Helicobacter acinonychis (strain Sheeba).